A 475-amino-acid chain; its full sequence is Trigger factor (475 aa).

The 86-residue stretch at 165–250 (GDRVTIDYLG…VKAVFRPDEL (86 aa)) folds into the PPIase FKBP-type domain. Residues 439–466 (EYDETDVPEEKPAKKKSAVKEKSAEKTS) are compositionally biased toward basic and acidic residues. The segment at 439–475 (EYDETDVPEEKPAKKKSAVKEKSAEKTSAKKKAPKKA) is disordered.

The protein belongs to the FKBP-type PPIase family. Tig subfamily.

The protein localises to the cytoplasm. It catalyses the reaction [protein]-peptidylproline (omega=180) = [protein]-peptidylproline (omega=0). In terms of biological role, involved in protein export. Acts as a chaperone by maintaining the newly synthesized protein in an open conformation. Functions as a peptidyl-prolyl cis-trans isomerase. This Bartonella tribocorum (strain CIP 105476 / IBS 506) protein is Trigger factor.